The chain runs to 432 residues: uncharacterized protein (432 aa).

SIS domains follow at residues 105–244 (WLTE…DLVS) and 277–422 (CDKK…VDLP).

This is an uncharacterized protein from Saccharomyces cerevisiae (strain ATCC 204508 / S288c) (Baker's yeast).